The primary structure comprises 405 residues: MQNHGIKKVVLAYSGGLDTSAIIPWLKENYEGCDVVACVVDIGQDRDDLKGVEQKALRSGASECYVVDAREEFIKDYVYPVLQTGALYEGSYLLGTSMARPLIAKALVDVAKKVGADALCHGATGKGNDQVRFESAWAALAPHLKVIAPWREWNLRSREALLDYLKARDIPTTASLEKIYSRDENAWHISTEGGVLESPWNAPNQDCWVWTVDPKDAPDEAEQVTVTVEKGNVVAVNGEQLTPFGCLEVLNKIGAKHGVGRIDIVENRLVGIKSRGCYETPGGTIMMAALRGVEQLVLDRDSFKWREQVGLEMSYVVYDGRWFAPLRQSLQAAAQSLAEQVSGEVVLELYKGRVTAIQKKSTNSLYNEEFATFGEDEVYDHSHAGGFIRLFSLSSRIRALNELKK.

12 to 20 contributes to the ATP binding site; sequence AYSGGLDTS. Tyr-92 and Ser-97 together coordinate L-citrulline. Residue Gly-122 coordinates ATP. Residues Thr-124, Asn-128, and Asp-129 each coordinate L-aspartate. Asn-128 serves as a coordination point for L-citrulline. L-citrulline-binding residues include Arg-132, Ser-181, Ser-190, Glu-266, and Tyr-278.

It belongs to the argininosuccinate synthase family. Type 1 subfamily. In terms of assembly, homotetramer.

The protein localises to the cytoplasm. The catalysed reaction is L-citrulline + L-aspartate + ATP = 2-(N(omega)-L-arginino)succinate + AMP + diphosphate + H(+). The protein operates within amino-acid biosynthesis; L-arginine biosynthesis; L-arginine from L-ornithine and carbamoyl phosphate: step 2/3. The sequence is that of Argininosuccinate synthase from Cronobacter sakazakii (strain ATCC BAA-894) (Enterobacter sakazakii).